A 280-amino-acid chain; its full sequence is Thylakoid lumenal protein TL20.3, chloroplastic (280 aa).

The transit peptide at 1-59 directs the protein to the chloroplast; it reads MAFSSLSPLPMKSLDISRSSSSVSRSPYHFQRYLLRRLQLSSRSNLEIKDSSNTREGCC. A thylakoid-targeting transit peptide spans 60 to 90; sequence SSAESNTWKRILSAAMAAAVIASSSGVPAMA. Pentapeptide repeat domains follow at residues 124–163 and 169–208; these read ENFR…NFSG and TLMD…DFSD.

In terms of assembly, interacts with thioredoxin. Interacts in vitro with LTO1.

It localises to the plastid. The protein localises to the chloroplast thylakoid lumen. Its function is as follows. Pentapeptide repeat protein of unknown function. Subject to degradation when reduced. This is Thylakoid lumenal protein TL20.3, chloroplastic from Arabidopsis thaliana (Mouse-ear cress).